The primary structure comprises 1331 residues: Xanthine dehydrogenase/oxidase (1331 aa).

In terms of domain architecture, 2Fe-2S ferredoxin-type spans 4–91 (DELVFFVNGK…HVAVTTVEGI (88 aa)). [2Fe-2S] cluster-binding residues include Cys43, Cys48, Cys51, Cys73, Cys112, Cys115, Cys147, and Cys149. The region spanning 228 to 413 (FEGERVTWIQ…LSIEIPYSKE (186 aa)) is the FAD-binding PCMH-type domain. FAD-binding positions include 256 to 263 (LVVGNTEI), Phe336, 346 to 350 (SIGGN), Asp359, Leu403, and Lys421. Residues Cys535 and Cys992 are joined by a disulfide bond. Residues Gln767 and Phe798 each contribute to the Mo-molybdopterin site. Positions 802 and 880 each coordinate substrate. Arg912 is a binding site for Mo-molybdopterin. Phe914 and Thr1010 together coordinate substrate. Ala1079 lines the Mo-molybdopterin pocket. The active-site Proton acceptor is the Glu1261.

The protein belongs to the xanthine dehydrogenase family. As to quaternary structure, homodimer. Interacts with BTN1A1. The cofactor is [2Fe-2S] cluster. Requires FAD as cofactor. It depends on Mo-molybdopterin as a cofactor. Subject to partial proteolysis; this alters the enzyme from the dehydrogenase form (D) to the oxidase form (O). In terms of processing, contains sulfhydryl groups that are easily oxidized (in vitro); this alters the enzyme from the dehydrogenase form (D) to the oxidase form (O).

The protein resides in the peroxisome. It localises to the cytoplasm. The protein localises to the secreted. It carries out the reaction xanthine + NAD(+) + H2O = urate + NADH + H(+). The enzyme catalyses hypoxanthine + NAD(+) + H2O = xanthine + NADH + H(+). It catalyses the reaction xanthine + O2 + H2O = urate + H2O2. Its activity is regulated as follows. Can be converted from the dehydrogenase form (D) to the oxidase form (O) irreversibly by proteolysis or reversibly through the oxidation of sulfhydryl groups. Its function is as follows. Key enzyme in purine degradation. Catalyzes the oxidation of hypoxanthine to xanthine. Catalyzes the oxidation of xanthine to uric acid. Contributes to the generation of reactive oxygen species. In Rattus norvegicus (Rat), this protein is Xanthine dehydrogenase/oxidase (Xdh).